The sequence spans 797 residues: MSDFVPHDLIPDLWDEILRRHWMFLETEESIEKLEERKQLEGCLKEFLCVVQHDRKFFLPETGHVLRRSVLELPDFSAQNAIVAFETISQYANNLFTKPWRKEYRTLKTYSGCFQHDIQSRLLDAEQLFLAMGYRRAAEDTFVLEGPICPDQVTNVSRDAMAAYVECQIMKHIYAGVTAAGYVCTWKDILQFRERYVGGTSTTIKEMVRQLSEKRVRMEQPPMQENTYSNVVSAAPTACGMRSNNVAHHPSSSGTCALHPNGLNEAGKYLPPYPAPPPQQPHLPGPLMTHSRSLDHYQEPQAHLPHRHSFDQQLQQQCQLPHVYEAPYDCLDGLSMGSSASYAAVTGAYNAPGNRYPLPYNISSQLNAPYASPADFYGNGQHTNMYATLGKTGPAHSCDLHRRQPNTSAAAAAALAAMQHRQSTYPPDHHLIDFDERAHLTQHDFGTHDYDPQYAELRGQVQPSMRGNPVAMYATYGGYDLPTTLPQAPPPTGQDMYIYARPVPKSSRMRALAEAGGINSTDKHPRSAEKQSTMDNNRKMHKELKERNSRTAPAKRSGTERDIPTTISDLNSYDSASLDGFVALDSSSSPPLMPKVQEGVGSFESWNYVFKNLERSGYTKDLGDREDLLVQSLDLGSLSITNGGAAPPAEKRREATNPTNGEKARTLDKKSGTGRREAKVVQAPAPSPLPNSSSAGVKKVKSALKTAVVDNRGTGSRQRTGAVPKQPPNVSPQLIVTSPNEWSCSFCTFLNPDTKRICEMCCRSKDFNLEAASAASSSAAAAAASAASVSHASSTCV.

The region spanning 79-146 (QNAIVAFETI…AAEDTFVLEG (68 aa)) is the PUB domain. Disordered stretches follow at residues 515-570 (AGGI…ISDL) and 638-697 (LSIT…SAGV). Over residues 662–679 (EKARTLDKKSGTGRREAK) the composition is skewed to basic and acidic residues. The RanBP2-type zinc-finger motif lies at 735–766 (IVTSPNEWSCSFCTFLNPDTKRICEMCCRSKD).

As to quaternary structure, homomultimer. Binds to dl and msl-1 via their nuclear localization signal (NLS). Also binds to Ran, Ran-like and mbo.

It is found in the cytoplasm. Has an essential role during oogenesis and embryogenesis, perhaps in modulating the levels of nuclear import of additional proteins. Modulates the nuclear import of dorsal (dl), Dif and male specific lethal 1 (msl-1). Negatively regulates nuclear import of dl and controls the accumulation of dl in the nucleus after immune challenge. This Drosophila melanogaster (Fruit fly) protein is Protein tamozhennic (tamo).